Here is a 104-residue protein sequence, read N- to C-terminus: Sweet protein mabinlin-1 (104 aa).

Disulfide bonds link Cys4/Cys53, Cys17/Cys42, Cys43/Cys91, and Cys55/Cys99.

This sequence belongs to the 2S seed storage albumins family. Heterodimer of a small A and a large B chain linked by disulfide bonds.

In terms of biological role, 2S seed storage protein having sweetness-inducing activity. This form is not heat stable. The protein is Sweet protein mabinlin-1 of Capparis masaikai (Mabinlang).